Reading from the N-terminus, the 172-residue chain is 3-hydroxydecanoyl-[acyl-carrier-protein] dehydratase (172 aa).

The active site involves histidine 71.

It belongs to the thioester dehydratase family. FabA subfamily. As to quaternary structure, homodimer.

The protein resides in the cytoplasm. It carries out the reaction a (3R)-hydroxyacyl-[ACP] = a (2E)-enoyl-[ACP] + H2O. It catalyses the reaction (3R)-hydroxydecanoyl-[ACP] = (2E)-decenoyl-[ACP] + H2O. The enzyme catalyses (2E)-decenoyl-[ACP] = (3Z)-decenoyl-[ACP]. Its pathway is lipid metabolism; fatty acid biosynthesis. In terms of biological role, necessary for the introduction of cis unsaturation into fatty acids. Catalyzes the dehydration of (3R)-3-hydroxydecanoyl-ACP to E-(2)-decenoyl-ACP and then its isomerization to Z-(3)-decenoyl-ACP. Can catalyze the dehydratase reaction for beta-hydroxyacyl-ACPs with saturated chain lengths up to 16:0, being most active on intermediate chain length. This Erwinia tasmaniensis (strain DSM 17950 / CFBP 7177 / CIP 109463 / NCPPB 4357 / Et1/99) protein is 3-hydroxydecanoyl-[acyl-carrier-protein] dehydratase.